We begin with the raw amino-acid sequence, 96 residues long: Cobalt transport protein CbiN (96 aa).

A run of 2 helical transmembrane segments spans residues 4–24 (WLAA…VSAG) and 59–79 (IESL…GYYL).

This sequence belongs to the CbiN family. Forms an energy-coupling factor (ECF) transporter complex composed of an ATP-binding protein (A component, CbiO), a transmembrane protein (T component, CbiQ) and 2 possible substrate-capture proteins (S components, CbiM and CbiN) of unknown stoichimetry.

It is found in the cell membrane. Its pathway is cofactor biosynthesis; adenosylcobalamin biosynthesis. Part of the energy-coupling factor (ECF) transporter complex CbiMNOQ involved in cobalt import. The chain is Cobalt transport protein CbiN from Halobacterium salinarum (strain ATCC 29341 / DSM 671 / R1).